We begin with the raw amino-acid sequence, 1028 residues long: Contactin-3 (1028 aa).

The signal sequence occupies residues 1–19 (MMFPWKQLILLSFIGCLGG). Ig-like C2-type domains lie at 26-117 (PVFI…AKLQ), 122-208 (ENFK…ARVL), 227-313 (PKIE…GRLT), 318-402 (PHWV…AELK), 408-497 (PDFS…LVVT), and 499-593 (PTRI…ADLI). 5 cysteine pairs are disulfide-bonded: Cys50–Cys100, Cys144–Cys196, Cys249–Cys297, Cys339–Cys386, and Cys431–Cys479. N-linked (GlcNAc...) asparagine glycosylation is found at Asn65 and Asn193. N-linked (GlcNAc...) asparagine glycosylation is found at Asn375, Asn468, and Asn489. Cys521 and Cys577 are joined by a disulfide. Fibronectin type-III domains lie at 600–698 (PPEN…TEEA), 703–800 (PPSE…SAEE), 805–901 (APSQ…TKKT), and 902–998 (PPSQ…TSMD). The segment at 684 to 713 (GEPSLPSEKVRTEEAVPEVPPSEVNGGGGS) is disordered. N-linked (GlcNAc...) asparagine glycosylation is found at Asn765, Asn860, Asn895, Asn913, Asn931, and Asn956. Ser1002 carries GPI-anchor amidated serine lipidation. A propeptide spans 1003 to 1028 (TSAISNVHPMSSYMPIVLFLIVYVLW) (removed in mature form).

This sequence belongs to the immunoglobulin superfamily. Contactin family. In terms of assembly, interacts with PTPRG. As to expression, in brain, it is expressed in frontal lobe, occipital lobe, cerebellum and amygdala.

The protein resides in the cell membrane. Contactins mediate cell surface interactions during nervous system development. Has some neurite outgrowth-promoting activity. In Homo sapiens (Human), this protein is Contactin-3 (CNTN3).